We begin with the raw amino-acid sequence, 777 residues long: Glucocorticoid receptor (777 aa).

Over residues 1-14 the composition is skewed to basic and acidic residues; it reads MDSKESLTPGKEEN. A disordered region spans residues 1–22; it reads MDSKESLTPGKEENPSSVLTQE. The interval 1 to 420 is modulating; the sequence is MDSKESLTPG…TATTGPPPKL (420 aa). At T8 the chain carries Phosphothreonine. Position 23 is an omega-N-methylarginine (R23). S45, S113, S134, and S141 each carry phosphoserine. A disordered region spans residues 130–182; sequence NRSTSVPENPKSSASSSVSAAPKEKEFPKTHSDVSSEQQNLKGQTGSNGGNVK. Residues 134 to 150 are compositionally biased toward low complexity; sequence SVPENPKSSASSSVSAA. Positions 151-163 are enriched in basic and acidic residues; it reads PKEKEFPKTHSDV. Over residues 164-174 the composition is skewed to polar residues; that stretch reads SSEQQNLKGQT. A phosphoserine mark is found at S203, S211, and S226. Residue K258 forms a Glycyl lysine isopeptide (Lys-Gly) (interchain with G-Cter in SUMO2) linkage. Phosphoserine is present on S267. Glycyl lysine isopeptide (Lys-Gly) (interchain with G-Cter in SUMO); alternate cross-links involve residues K277 and K293. Residues K277 and K293 each participate in a glycyl lysine isopeptide (Lys-Gly) (interchain with G-Cter in SUMO2); alternate cross-link. The span at 394-414 shows a compositional bias: low complexity; that stretch reads SSPSMRPDVSSPPSSSSTATT. Residues 394 to 415 form a disordered region; sequence SSPSMRPDVSSPPSSSSTATTG. S404 carries the phosphoserine modification. K419 is covalently cross-linked (Glycyl lysine isopeptide (Lys-Gly) (interchain with G-Cter in ubiquitin)). NR C4-type zinc fingers lie at residues 421–441 and 457–481; these read CLVC…CGSC and CAGR…YRKC. Positions 421–486 form a DNA-binding region, nuclear receptor; that stretch reads CLVCSDEASG…RYRKCLQAGM (66 aa). Residues K480, K492, K494, and K495 each carry the N6-acetyllysine modification. The interaction with CLOCK stretch occupies residues 485–777; the sequence is GMNLEARKTK…NIKKLLFHQK (293 aa). Residues 487–523 form a hinge region; it reads NLEARKTKKKIKGIQQATTGVSQETSENPANKTIVPA. Residues 524–758 enclose the NR LBD domain; it reads TLPQLTPTLV…FPEMLAEIIT (235 aa). Positions 532–697 are interaction with CRY1; that stretch reads LVSLLEVIEP…EIRMTYIKEL (166 aa). K703 is covalently cross-linked (Glycyl lysine isopeptide (Lys-Gly) (interchain with G-Cter in SUMO)).

The protein belongs to the nuclear hormone receptor family. NR3 subfamily. In terms of assembly, heteromultimeric cytoplasmic complex with HSP90AA1, HSPA1A/HSPA1B, and FKBP5 or another immunophilin such as PPID, STIP1, or the immunophilin homolog PPP5C. Upon ligand binding FKBP5 dissociates from the complex and FKBP4 takes its place, thereby linking the complex to dynein and mediating transport to the nucleus, where the complex dissociates. Probably forms a complex composed of chaperones HSP90 and HSP70, co-chaperones CDC37, PPP5C, TSC1 and client protein TSC2, CDK4, AKT, RAF1 and NR3C1; this complex does not contain co-chaperones STIP1/HOP and PTGES3/p23. Directly interacts with UNC45A. Binds to DNA as a homodimer, and as heterodimer with NR3C2 or the retinoid X receptor. Binds STAT5A and STAT5B homodimers and heterodimers. Interacts with NRIP1, POU2F1, POU2F2 and TRIM28. Interacts with several coactivator complexes, including the SMARCA4 complex, CREBBP/EP300, TADA2L (Ada complex) and p160 coactivators such as NCOA2 and NCOA6. Interaction with BAG1 inhibits transactivation. Interacts with HEXIM1 and TGFB1I1. Interacts with NCOA1. Interacts with NCOA3, SMARCA4, SMARCC1, SMARCD1, and SMARCE1. Interacts with CLOCK, CRY1 and CRY2 in a ligand-dependent fashion. Interacts with CIART. Interacts with RWDD3. Interacts with UBE2I/UBC9 and this interaction is enhanced in the presence of RWDD3. Interacts with GRIP1. Interacts with NR4A3 (via nuclear receptor DNA-binding domain), represses transcription activity of NR4A3 on the POMC promoter Nur response element (NurRE). Directly interacts with PNRC2 to attract and form a complex with UPF1 and DCP1A; the interaction leads to rapid mRNA degradation. Interacts with GSK3B. Interacts with FNIP1 and FNIP2. Interacts (via C-terminus) with HNRNPU (via C-terminus). Interacts with MCM3AP. Interacts (via domain NR LBD) with HSP90AA1 and HSP90AB1. In the absence of hormonal ligand, interacts with TACC1. Interacts (via NR LBD domain) with ZNF764 (via KRAB domain); the interaction regulates transcription factor activity of NR3C1 by directing its actions toward certain biologic pathways. In terms of processing, acetylation by CLOCK reduces its binding to glucocorticoid response elements and its transcriptional activity. Increased proteasome-mediated degradation in response to glucocorticoids. Post-translationally, phosphorylated in the absence of hormone; becomes hyperphosphorylated in the presence of glucocorticoid. The Ser-203, Ser-226 and Ser-404-phosphorylated forms are mainly cytoplasmic, and the Ser-211-phosphorylated form is nuclear. Phosphorylation at Ser-211 increases transcriptional activity. Phosphorylation at Ser-203, Ser-226 and Ser-404 decreases signaling capacity. Phosphorylation at Ser-404 may protect from glucocorticoid-induced apoptosis. Phosphorylation at Ser-203 and Ser-211 is not required in regulation of chromosome segregation. May be dephosphorylated by PPP5C, attenuates NR3C1 action. In terms of processing, ubiquitinated by UBR5, leading to its degradation: UBR5 specifically recognizes and binds ligand-bound NR3C1 when it is not associated with coactivators (NCOAs). In presence of NCOAs, the UBR5-degron is not accessible, preventing its ubiquitination and degradation. Sumoylation at Lys-277 and Lys-293 negatively regulates its transcriptional activity. Sumoylation at Lys-703 positively regulates its transcriptional activity in the presence of RWDD3. Sumoylation at Lys-277 and Lys-293 is dispensable whereas sumoylation at Lys-703 is critical for the stimulatory effect of RWDD3 on its transcriptional activity. Heat shock increases sumoylation in a RWDD3-dependent manner.

It is found in the cytoplasm. The protein localises to the nucleus. Its subcellular location is the mitochondrion. The protein resides in the cytoskeleton. It localises to the spindle. It is found in the microtubule organizing center. The protein localises to the centrosome. Its subcellular location is the chromosome. The protein resides in the nucleoplasm. In terms of biological role, receptor for glucocorticoids (GC). Has a dual mode of action: as a transcription factor that binds to glucocorticoid response elements (GRE), both for nuclear and mitochondrial DNA, and as a modulator of other transcription factors. Affects inflammatory responses, cellular proliferation and differentiation in target tissues. Involved in chromatin remodeling. Plays a role in rapid mRNA degradation by binding to the 5' UTR of target mRNAs and interacting with PNRC2 in a ligand-dependent manner which recruits the RNA helicase UPF1 and the mRNA-decapping enzyme DCP1A, leading to RNA decay. Could act as a coactivator for STAT5-dependent transcription upon growth hormone (GH) stimulation and could reveal an essential role of hepatic GR in the control of body growth. Mediates glucocorticoid-induced apoptosis. Promotes accurate chromosome segregation during mitosis. May act as a tumor suppressor. May play a negative role in adipogenesis through the regulation of lipolytic and antilipogenic gene expression. In Saimiri boliviensis boliviensis (Bolivian squirrel monkey), this protein is Glucocorticoid receptor (NR3C1).